We begin with the raw amino-acid sequence, 522 residues long: MSQDLQKEVASRKTFAIISHPDAGKTTITEQLLLFGGVIRSAGTVKGKKSGKFATSDWMEIEKQRGISVTSSVMQFDYNGSRINILDTPGHSDFSEDTYRTLMAVDSAVMVIDAAKGIEAQTLKLFKVCRMRGIPIFTFINKMDRQGKMPLELLAELEEVLGIESYPMNWPIGMGKELAGLYDRYHRVIEQYRSEEDERFLPLGEDGDLKEAHAIQKSLYYDQALEEIMLLDEAGNDFSRERIIAGEQTPVFFGSALTNFGVETFLRTFVDFAPAPSSHESNEGVIEADNPKFSGFIFKIQANMNPAHRDRIAFIRICSGEFERGMNVTLTRTGKSLKLANSTQFMADDRETVNRAVAGDIIGLYDTGNYQIGDTITNGSKKLEFEKLPQFTPELFMRVYAKNVMKQKHFHKGVEQLVQEGAIQLFKTWRTEEYIIGAVGQLQFEVFEHRMRGEYNSEIRMEPIGKKIARWVKEEDADEKLSTARSMLVKDRFDQPLFLFENEFAINWFNDKNPDIELTSLL.

One can recognise a tr-type G domain in the interval Ala-10–Ser-277. Residues Ser-19–Thr-26, Asp-87–His-91, and Asn-141–Asp-144 contribute to the GTP site.

The protein belongs to the TRAFAC class translation factor GTPase superfamily. Classic translation factor GTPase family. PrfC subfamily.

Its subcellular location is the cytoplasm. Its function is as follows. Increases the formation of ribosomal termination complexes and stimulates activities of RF-1 and RF-2. It binds guanine nucleotides and has strong preference for UGA stop codons. It may interact directly with the ribosome. The stimulation of RF-1 and RF-2 is significantly reduced by GTP and GDP, but not by GMP. This Listeria monocytogenes serovar 1/2a (strain ATCC BAA-679 / EGD-e) protein is Peptide chain release factor 3.